Consider the following 369-residue polypeptide: MIGAGSWGTTFAKILADGGNDVVVWARRPELAREIDEGKRNSDYLQGINLPRSLRATSHLGEAMRGAEQVFVSLPSQTLRSNLDAMIPYLGPATVVISLMKGVEKGTGLRMSEVIAQGLPIDPEQIAVVSGPNLALEIAREQPTAAVVSSVSPATAVAVATSATNRYFRSFVNTDVIGTEFGGVLKNLIAVAIGIVDGVGYGENTKASIITRGLVEMTDFAVAYGADPQTLSGLAGLGDLIATCESPLSRNNTAGRLLGQGYSFTDVVKQMDQAAEGLASVTPILSLAEARGVEMPIVRQVSQVLAGTLAPKDIAPHLTTDDEPQGERTRGERTTDDGQGQGRTSVWGSLKRAFDQLRDGGGSSRRDRP.

Positions 6, 7, 27, 28, and 101 each coordinate NADPH. The sn-glycerol 3-phosphate site is built by Lys-101 and Gly-131. Ala-135 is a binding site for NADPH. Residues Lys-186, Asp-239, Ser-249, Arg-250, and Asn-251 each coordinate sn-glycerol 3-phosphate. Lys-186 functions as the Proton acceptor in the catalytic mechanism. Arg-250 is a binding site for NADPH. Glu-276 contacts NADPH. The segment at 312–369 (KDIAPHLTTDDEPQGERTRGERTTDDGQGQGRTSVWGSLKRAFDQLRDGGGSSRRDRP) is disordered. 2 stretches are compositionally biased toward basic and acidic residues: residues 325–336 (QGERTRGERTTD) and 352–369 (RAFD…RDRP).

Belongs to the NAD-dependent glycerol-3-phosphate dehydrogenase family.

The protein resides in the cytoplasm. The enzyme catalyses sn-glycerol 3-phosphate + NAD(+) = dihydroxyacetone phosphate + NADH + H(+). It catalyses the reaction sn-glycerol 3-phosphate + NADP(+) = dihydroxyacetone phosphate + NADPH + H(+). The protein operates within membrane lipid metabolism; glycerophospholipid metabolism. Its function is as follows. Catalyzes the reduction of the glycolytic intermediate dihydroxyacetone phosphate (DHAP) to sn-glycerol 3-phosphate (G3P), the key precursor for phospholipid synthesis. This is Glycerol-3-phosphate dehydrogenase [NAD(P)+] from Leifsonia xyli subsp. xyli (strain CTCB07).